Here is an 85-residue protein sequence, read N- to C-terminus: Latartoxin-1a (85 aa).

Residues 1 to 19 form the signal peptide; it reads MKVLVFAIVCSVLLQVVLS. Positions 20-25 are cleaved as a propeptide — removed in mature form; the sequence is ADEEAR. Positions 22–25 match the Processing quadruplet motif motif; the sequence is EEAR. Disulfide bonds link Cys-27/Cys-42, Cys-34/Cys-47, Cys-41/Cys-64, and Cys-49/Cys-62.

This sequence belongs to the neurotoxin 19 (CSTX) family. In terms of processing, contains 4 disulfide bonds. Cleavage of the propeptide depends on the processing quadruplet motif (XXXR, with at least one of X being E). As to expression, expressed by the venom gland.

It localises to the secreted. Functionally, insect toxin. Causes paralysis in larvae of C.vicina by depolarizing membranes at the neuromuscular junction. The polypeptide is Latartoxin-1a (Lachesana tarabaevi (Spider)).